The sequence spans 84 residues: U8-theraphotoxin-Hhn1c 2 (84 aa).

The N-terminal stretch at 1–21 is a signal peptide; sequence MKVVLLVCLVWMMAMMELVSC. 5 disulfide bridges follow: C23/C35, C29/C44, C34/C67, C54/C75, and C69/C81.

It belongs to the AVIT (prokineticin) family. Expressed by the venom gland.

The protein localises to the secreted. In Cyriopagopus hainanus (Chinese bird spider), this protein is U8-theraphotoxin-Hhn1c 2.